We begin with the raw amino-acid sequence, 200 residues long: Probable nicotinate-nucleotide adenylyltransferase (200 aa).

The protein belongs to the NadD family.

It carries out the reaction nicotinate beta-D-ribonucleotide + ATP + H(+) = deamido-NAD(+) + diphosphate. It functions in the pathway cofactor biosynthesis; NAD(+) biosynthesis; deamido-NAD(+) from nicotinate D-ribonucleotide: step 1/1. Functionally, catalyzes the reversible adenylation of nicotinate mononucleotide (NaMN) to nicotinic acid adenine dinucleotide (NaAD). In Clostridium acetobutylicum (strain ATCC 824 / DSM 792 / JCM 1419 / IAM 19013 / LMG 5710 / NBRC 13948 / NRRL B-527 / VKM B-1787 / 2291 / W), this protein is Probable nicotinate-nucleotide adenylyltransferase.